A 238-amino-acid chain; its full sequence is Small ribosomal subunit protein uS2c (238 aa).

This sequence belongs to the universal ribosomal protein uS2 family.

The protein localises to the plastid. The protein resides in the chloroplast. The polypeptide is Small ribosomal subunit protein uS2c (rps2) (Jasminum nudiflorum (Winter jasmine)).